Reading from the N-terminus, the 603-residue chain is Podocalyxin-like protein 2 (603 aa).

The first 28 residues, 1-28 (MARPLRAARLPPPLLLLLAAGASLGAYA), serve as a signal peptide directing secretion. At 29–499 (VGVDEPGPEG…ATQVRSDYGT (471 aa)) the chain is on the extracellular side. The interval 53–92 (FEPLDSEEPSEAMGLDAGLAPGSGFPSEDSEESRLLQPPQ) is disordered. Residue S75 is glycosylated (O-linked (Xyl...) (chondroitin sulfate) serine). Position 93 is a sulfotyrosine (Y93). Residue N101 is glycosylated (N-linked (GlcNAc...) asparagine). The residue at position 113 (Y113) is a Sulfotyrosine. The segment at 124-368 (SMEDPGQAPD…LEGQAAEAHS (245 aa)) is disordered. Residues 156–187 (QEEEEEEEEEEEEREEEEREKEAEEEEEEEEL) show a composition bias toward acidic residues. Positions 196 to 216 (ATAQAHAPSPSTSSSTSSQSP) are enriched in low complexity. 3 stretches are compositionally biased toward polar residues: residues 240–266 (VKPT…QESG), 302–314 (ALPS…TVPP), and 339–349 (DTESTPSSATW). N260 carries N-linked (GlcNAc...) asparagine glycosylation. A glycan (N-linked (GlcNAc...) asparagine) is linked at N394. The chain crosses the membrane as a helical span at residues 500 to 520 (LFVVLVIIGVICFIIIVLGLL). At 521-603 (YNCWQRRMPK…SDVFEEDTHL (83 aa)) the chain is on the cytoplasmic side. Polar residues predominate over residues 558-570 (DSQSEMQEKQPSL). Residues 558 to 603 (DSQSEMQEKQPSLNGGAINGPSSWSALMGSKRDPEDSDVFEEDTHL) are disordered. S569 and S594 each carry phosphoserine. A compositionally biased stretch (acidic residues) spans 592 to 603 (EDSDVFEEDTHL).

The protein belongs to the podocalyxin family. As to quaternary structure, homodimer; disulfide-linked. Interacts with SELL, SELE and SELP. In terms of processing, glycosylated; contains chondroitin sulfate. Displays sialylated O-linked oligosaccharides. Post-translationally, sulfation is necessary for interaction with SELL. Sialylated O-linked oligosaccharides are necessary for interaction with SELL, SELE and SELP.

The protein localises to the membrane. Acts as a ligand for vascular selectins. Mediates rapid rolling of leukocytes over vascular surfaces through high affinity divalent cation-dependent interactions with E-, P- and L-selectins. The protein is Podocalyxin-like protein 2 (Podxl2) of Mus musculus (Mouse).